The sequence spans 514 residues: MELIVIIITLAFCILLYGTRWRAALDPREPRLISPTVPLIGHILGIATDGFGYFSKLNDKYGLPAFSLQMPLSRLYVITSSELVPAIQRQSQNIRFDTFEFTLAAERVGGVSGPGLKLLKGSIVDELQHAMHHALIGHGLDAMNLSMIEAIKPSIDELQSQKQAAFDLFAWCKRSITMASTDSVYGPMNPFRSIEVERAFWDFASNMNMIILNVLPFLTARKSLDDRRKVVDALTEYYNLGGHENSSEMTYGRWEVQYNKGITTQDIARMEIVNAIGVLSNTAPSTFWTLFEIYSRPSLLRDLRQELVASAVYTHPGTDGGIVRTIDLSAVRAKCSLLLGTFQEVLRMRSNAIVTRMVHEDTILNERVLFKKGSVIVIPARCVNREKSVWGETGDSFDAYRYLGQGKSGTSRSGRNVTRVAFQSFGTAPNICPGRHFASGEILAVVAMVILRFDMEPVLGEWIPPKANVKTLASSIQTPAGEFMVTLRERKEFKDDKWDFRVTEGDSKFPLLVG.

Residues 2–24 (ELIVIIITLAFCILLYGTRWRAA) traverse the membrane as a helical segment. Asparagine 144, asparagine 245, and asparagine 416 each carry an N-linked (GlcNAc...) asparagine glycan. Cysteine 432 provides a ligand contact to heme.

Belongs to the cytochrome P450 family. The cofactor is heme.

The protein resides in the membrane. The protein operates within secondary metabolite biosynthesis. In terms of biological role, cytochrome P450 monooxygenase; part of the gene cluster that mediates the biosynthesis of the indole diterpenes nodulisporic acids (NA). Nodulisporic acid A (NAA) and its chemically modified derivatives are of particular significance because of their highly potent insecticidal activity against blood-feeding arthropods and lack of observable adverse effects on mammals, in particular the tremogenicity associated with the paspaline-derived IDTs is not observed. The geranylgeranyl diphosphate (GGPP) synthase ggs1, localized outside of the cluster, is proposed to catalyze the first step in nodulisporic acid biosynthesis via conversion of farnesyl pyrophosphate and isopentyl pyrophosphate into geranylgeranyl pyrophosphate (GGPP). Condensation of indole-3-glycerol phosphate with GGPP by the prenyl transferase nodC then forms 3-geranylgeranylindole (3-GGI). Epoxidation by the FAD-dependent monooxygenase nodM leads to a single-epoxidized-GGI that is substrate of the terpene cyclase nodB for cyclization to yield emindole SB. The terminal methyl carbon, C28, of emindole SB is then oxidized by the cytochrome P450 monooxygenase nodW to produce nodulisporic acid F (NAF), the pentacyclic core of NAA. NAF is converted to nodulisporic acid E (NAE) via prenylation. This step is probably performed by one of the indole diterpene prenyltransferases nodD1 or nodD2. Several oxidation steps performed by the FAD-linked oxidoreductase nodO and one of the cytochrome P450 monooxygenase nodR, nodX or nodZ further convert NAE to nodulisporic acid D (NAD). NAD is substrate of cytochrome P450 monooxygenase nodJ to produce the precursor of nodulisporic acid C (NAC), converted to NAC by one of the indole diterpene prenyltransferases nodD1 or nodD2. The FAD-dependent monooxygenase nodY2 then oxidizes NAC to nodulisporic acid B (NAB). Finally NAB is converted to NAA by one of the cytochrome P450 monooxygenases nodR, nodX or nodZ. The sequence is that of Cytochrome P450 monooxygenase nodJ from Hypoxylon pulicicidum.